The following is a 359-amino-acid chain: Serine/threonine-protein phosphatase 2A activator 2 (359 aa).

It belongs to the PTPA-type PPIase family.

The protein localises to the cytoplasm. It carries out the reaction [protein]-peptidylproline (omega=180) = [protein]-peptidylproline (omega=0). Functionally, PPIases accelerate the folding of proteins. It catalyzes the cis-trans isomerization of proline imidic peptide bonds in oligopeptides. Acts as a regulatory subunit for PP2A-like phosphatases modulating their activity or substrate specificity, probably by inducing a conformational change in the catalytic subunit, a direct target of the PPIase. Can reactivate inactive phosphatase PP2A-phosphatase methylesterase complexes (PP2Ai) in presence of ATP and Mg(2+) by dissociating the inactive form from the complex. The sequence is that of Serine/threonine-protein phosphatase 2A activator 2 (RRD2) from Eremothecium gossypii (strain ATCC 10895 / CBS 109.51 / FGSC 9923 / NRRL Y-1056) (Yeast).